Reading from the N-terminus, the 145-residue chain is FAD synthase (145 aa).

Residues 5 to 6 (TF), 10 to 13 (HPGH), Asp92, and Tyr119 contribute to the ATP site.

This sequence belongs to the archaeal FAD synthase family. Homodimer. The cofactor is a divalent metal cation.

It carries out the reaction FMN + ATP + H(+) = FAD + diphosphate. It participates in cofactor biosynthesis; FAD biosynthesis; FAD from FMN: step 1/1. Functionally, catalyzes the transfer of the AMP portion of ATP to flavin mononucleotide (FMN) to produce flavin adenine dinucleotide (FAD) coenzyme. In Methanothermus fervidus (strain ATCC 43054 / DSM 2088 / JCM 10308 / V24 S), this protein is FAD synthase.